A 1078-amino-acid polypeptide reads, in one-letter code: Exportin-1 (1078 aa).

Residues 34-100 enclose the Importin N-terminal domain; it reads AQQVLTQFQA…RNYIVAVMIK (67 aa).

This sequence belongs to the exportin family. In terms of assembly, interacts with php4.

Its subcellular location is the nucleus. In terms of biological role, receptor for the leucine-rich nuclear export signal (NES). The sequence is that of Exportin-1 (xpo1) from Schizosaccharomyces pombe (strain 972 / ATCC 24843) (Fission yeast).